The primary structure comprises 544 residues: Glucose-6-phosphate isomerase (544 aa).

The active-site Proton donor is Glu-354. Catalysis depends on residues His-385 and Lys-510.

Belongs to the GPI family.

It is found in the cytoplasm. The catalysed reaction is alpha-D-glucose 6-phosphate = beta-D-fructose 6-phosphate. The protein operates within carbohydrate biosynthesis; gluconeogenesis. It participates in carbohydrate degradation; glycolysis; D-glyceraldehyde 3-phosphate and glycerone phosphate from D-glucose: step 2/4. Catalyzes the reversible isomerization of glucose-6-phosphate to fructose-6-phosphate. The sequence is that of Glucose-6-phosphate isomerase from Deinococcus deserti (strain DSM 17065 / CIP 109153 / LMG 22923 / VCD115).